Reading from the N-terminus, the 252-residue chain is Sulfate transporter CysZ (252 aa).

5 consecutive transmembrane segments (helical) span residues 29-49, 66-86, 141-160, 164-186, and 212-232; these read FVLL…FYIF, FLSW…LATF, LVYI…IPAL, VAPF…DYPF, and ALVS…PVAV.

The protein belongs to the CysZ family.

It localises to the cell inner membrane. In terms of biological role, high affinity, high specificity proton-dependent sulfate transporter, which mediates sulfate uptake. Provides the sulfur source for the cysteine synthesis pathway. This chain is Sulfate transporter CysZ, found in Vibrio atlanticus (strain LGP32) (Vibrio splendidus (strain Mel32)).